The following is a 194-amino-acid chain: Peptidyl-tRNA hydrolase (194 aa).

TRNA is bound at residue tyrosine 16. Histidine 21 serves as the catalytic Proton acceptor. TRNA-binding residues include phenylalanine 66, asparagine 68, and asparagine 114.

This sequence belongs to the PTH family. In terms of assembly, monomer.

The protein localises to the cytoplasm. It carries out the reaction an N-acyl-L-alpha-aminoacyl-tRNA + H2O = an N-acyl-L-amino acid + a tRNA + H(+). Functionally, hydrolyzes ribosome-free peptidyl-tRNAs (with 1 or more amino acids incorporated), which drop off the ribosome during protein synthesis, or as a result of ribosome stalling. Catalyzes the release of premature peptidyl moieties from peptidyl-tRNA molecules trapped in stalled 50S ribosomal subunits, and thus maintains levels of free tRNAs and 50S ribosomes. In Geobacter metallireducens (strain ATCC 53774 / DSM 7210 / GS-15), this protein is Peptidyl-tRNA hydrolase.